The chain runs to 278 residues: Type II restriction enzyme NgoPII (278 aa).

This sequence belongs to the NgoPII type II restriction endonuclease family.

It catalyses the reaction Endonucleolytic cleavage of DNA to give specific double-stranded fragments with terminal 5'-phosphates.. In terms of biological role, a P subtype restriction enzyme that recognizes the double-stranded sequence 5'-GGCC-3' and cleaves after G-2. The sequence is that of Type II restriction enzyme NgoPII (ngoPIIR) from Neisseria gonorrhoeae.